Here is a 309-residue protein sequence, read N- to C-terminus: UDP-URONIC ACID TRANSPORTER 1 (309 aa).

Transmembrane regions (helical) follow at residues 9 to 29 (TLFISTLIISWYSSNIGVLLL), 43 to 63 (IFLTMCHMSACAILSYISIVF), 78 to 98 (FLKVATLSIVFCASVVGGNIS), 104 to 124 (VSFNQAVGATTPFFTALFAYL), 131 to 151 (AWVTYGALVPVVAGVVIASGG), 152 to 172 (EPGFHWFGFIMCISATAARAF), 193 to 213 (LMLYMSPIAVIALLPVTLFME), 231 to 251 (WILLLVNSVMAYSANLLNFLV), 256 to 278 (SALTLQVLGNAKGAVAVVISILI), and 283 to 302 (VTVMGIGGYSITVLGVVAYG).

Belongs to the TPT transporter family. TPT (TC 2.A.7.9) subfamily. As to expression, ubiquitous.

It localises to the golgi apparatus membrane. Functionally, UDP-glucuronic acid transporter that modulates the polysaccharide composition of seed mucilage. Transports UDP-glucuronic acid (UDP-GlcA) and UDP-galacturonic acid (UDP-GalA) in vitro. This Arabidopsis thaliana (Mouse-ear cress) protein is UDP-URONIC ACID TRANSPORTER 1.